The sequence spans 438 residues: (3,5-dihydroxyphenyl)acetyl-CoA 1,2-dioxygenase (438 aa).

Substrate is bound by residues aspartate 183, glutamate 189, 222–225 (HPRY), 233–238 (AGINLK), glycine 296, 325–327 (IPG), and glutamine 416.

This sequence belongs to the enoyl-CoA hydratase/isomerase family. As to quaternary structure, homohexamer; dimer of trimers.

It catalyses the reaction (3,5-dihydroxyphenyl)acetyl-CoA + O2 = 2-(3,5-dihydroxyphenyl)-2-oxoacetate + CoA + H(+). With respect to regulation, inhibited by DPA-S-(N-acetylcysteamine). Its function is as follows. Involved in the biosynthesis of the nonproteinogenic amino acid monomer (S)-3,5-dihydroxyphenylglycine (Dpg) responsible of the production of vancomycin and teicoplanin antibiotics. Catalyzes the unusual conversion 3,5-dihydroxyphenylacetyl-CoA (DPA-CoA) to 3,5-dihydroxyphenylglyoxylate. DpgC performed a net four-electron oxidation of the benzylic carbon of DPA-CoA and the hydrolysis of the thioester bond to generate free CoA. DpgC has the ability to process a diverse range of substituted phenylacetyl-CoA substrates. The sequence is that of (3,5-dihydroxyphenyl)acetyl-CoA 1,2-dioxygenase from Streptomyces toyocaensis.